Consider the following 277-residue polypeptide: Pantothenate synthetase (277 aa).

26–33 (MGNLHEGH) contributes to the ATP binding site. Catalysis depends on histidine 33, which acts as the Proton donor. Glutamine 57 provides a ligand contact to (R)-pantoate. Glutamine 57 provides a ligand contact to beta-alanine. Residue 144-147 (GKKD) coordinates ATP. Position 150 (glutamine 150) interacts with (R)-pantoate. ATP contacts are provided by residues valine 173 and 181–184 (LSSR).

This sequence belongs to the pantothenate synthetase family. Homodimer.

The protein localises to the cytoplasm. It carries out the reaction (R)-pantoate + beta-alanine + ATP = (R)-pantothenate + AMP + diphosphate + H(+). It participates in cofactor biosynthesis; (R)-pantothenate biosynthesis; (R)-pantothenate from (R)-pantoate and beta-alanine: step 1/1. Catalyzes the condensation of pantoate with beta-alanine in an ATP-dependent reaction via a pantoyl-adenylate intermediate. This chain is Pantothenate synthetase, found in Paraburkholderia phymatum (strain DSM 17167 / CIP 108236 / LMG 21445 / STM815) (Burkholderia phymatum).